The primary structure comprises 222 residues: Endonuclease V (222 aa).

Mg(2+) is bound by residues Asp-34 and Asp-102.

The protein belongs to the endonuclease V family. Requires Mg(2+) as cofactor.

The protein localises to the cytoplasm. The enzyme catalyses Endonucleolytic cleavage at apurinic or apyrimidinic sites to products with a 5'-phosphate.. Functionally, DNA repair enzyme involved in the repair of deaminated bases. Selectively cleaves double-stranded DNA at the second phosphodiester bond 3' to a deoxyinosine leaving behind the intact lesion on the nicked DNA. The chain is Endonuclease V from Proteus mirabilis (strain HI4320).